The following is a 307-amino-acid chain: Recombination-associated protein RdgC (307 aa).

Belongs to the RdgC family.

Its subcellular location is the cytoplasm. It is found in the nucleoid. May be involved in recombination. The chain is Recombination-associated protein RdgC from Colwellia psychrerythraea (strain 34H / ATCC BAA-681) (Vibrio psychroerythus).